We begin with the raw amino-acid sequence, 421 residues long: Mannose-1-phosphate guanyltransferase alpha-A (421 aa).

Belongs to the transferase hexapeptide repeat family.

The catalysed reaction is alpha-D-mannose 1-phosphate + GTP + H(+) = GDP-alpha-D-mannose + diphosphate. The protein operates within nucleotide-sugar biosynthesis; GDP-alpha-D-mannose biosynthesis; GDP-alpha-D-mannose from alpha-D-mannose 1-phosphate (GTP route): step 1/1. The protein is Mannose-1-phosphate guanyltransferase alpha-A (gmppa-a) of Xenopus laevis (African clawed frog).